A 331-amino-acid polypeptide reads, in one-letter code: ESX-3 secretion system protein EccE3 (331 aa).

A run of 2 helical transmembrane segments spans residues 11–31 (GRVT…PWQS) and 37–57 (LLGV…GLYF).

The protein belongs to the EccE family. In terms of assembly, part of the ESX-3 / type VII secretion system (T7SS), which is composed of cytosolic and membrane components. The ESX-3 membrane complex is composed of EccB3, EccC3, EccD3 and EccE3.

It localises to the cell inner membrane. Functionally, part of the ESX-3 specialized secretion system, which is important for iron and zinc uptake or homeostasis. The polypeptide is ESX-3 secretion system protein EccE3 (Mycobacterium tuberculosis (strain CDC 1551 / Oshkosh)).